The chain runs to 105 residues: Endogenous retrovirus group K member 8 Rec protein (105 aa).

The interval 1 to 48 is disordered; that stretch reads MNPSEMQRKAPPRRRRHRNRAPLTHKMNKMVTSEEQMKLPSTKKAEPP. Residues 10 to 20 show a composition bias toward basic residues; sequence APPRRRRHRNR. Residues 13-20 carry the Nuclear localization signal motif; the sequence is RRRRHRNR. The Nuclear export signal motif lies at 50–59; that stretch reads WAQLKKLTQL.

As to quaternary structure, forms homodimers, homotrimers, and homotetramers via a C-terminal domain. Associates with XPO1 and with ZNF145.

It is found in the cytoplasm. The protein resides in the nucleus. The protein localises to the nucleolus. Functionally, retroviral replication requires the nuclear export and translation of unspliced, singly-spliced and multiply-spliced derivatives of the initial genomic transcript. Rec interacts with a highly structured RNA element (RcRE) present in the viral 3'LTR and recruits the cellular nuclear export machinery. This permits export to the cytoplasm of unspliced genomic or incompletely spliced subgenomic viral transcripts. In Homo sapiens (Human), this protein is Endogenous retrovirus group K member 8 Rec protein (ERVK-8).